Here is a 309-residue protein sequence, read N- to C-terminus: Ketosamine-3-kinase (309 aa).

S20 carries the post-translational modification Phosphoserine. 89 to 91 (EHL) provides a ligand contact to ATP. Catalysis depends on D217, which acts as the Proton acceptor.

It belongs to the fructosamine kinase family.

The enzyme catalyses N(6)-D-ribulosyl-L-lysyl-[protein] + ATP = N(6)-(3-O-phospho-D-ribulosyl)-L-lysyl-[protein] + ADP + H(+). The catalysed reaction is N(6)-(D-psicosyl)-L-lysyl-[protein] + ATP = N(6)-(3-O-phospho-D-psicosyl)-L-lysyl-[protein] + ADP + H(+). Functionally, ketosamine-3-kinase involved in protein deglycation by mediating phosphorylation of ribuloselysine and psicoselysine on glycated proteins, to generate ribuloselysine-3 phosphate and psicoselysine-3 phosphate, respectively. Ribuloselysine-3 phosphate and psicoselysine-3 phosphate adducts are unstable and decompose under physiological conditions. Not able to phosphorylate fructoselysine. This is Ketosamine-3-kinase from Mus musculus (Mouse).